Consider the following 23-residue polypeptide: Coenzyme PQQ synthesis protein A (23 aa).

A cross-link (pyrroloquinoline quinone (Glu-Tyr)) is located at residues 15-19 (EVTMY).

This sequence belongs to the PqqA family.

The protein operates within cofactor biosynthesis; pyrroloquinoline quinone biosynthesis. Required for coenzyme pyrroloquinoline quinone (PQQ) biosynthesis. PQQ is probably formed by cross-linking a specific glutamate to a specific tyrosine residue and excising these residues from the peptide. The sequence is that of Coenzyme PQQ synthesis protein A from Ectopseudomonas mendocina (strain ymp) (Pseudomonas mendocina).